Here is a 205-residue protein sequence, read N- to C-terminus: Macrophage immunometabolism regulator (205 aa).

The tract at residues 1-40 (MEVDINGVNRTNNSVPSTTEGSSPSKPDPEKPRCSSTPCS) is disordered. Over residues 8–25 (VNRTNNSVPSTTEGSSPS) the composition is skewed to polar residues.

The protein belongs to the UNC119-binding protein family. Interacts with unc119 family proteins; interaction preferentially takes place when unc119 proteins are unliganded with myristoylated proteins.

The protein localises to the cytoplasm. It localises to the cell projection. Its subcellular location is the cilium. Functionally, may play a role in immune regulation through regulation of the macrophage function. May also play a role in trafficking of proteins via its interaction with unc119 family cargo adapters. May play a role in ciliary membrane localization. In Xenopus tropicalis (Western clawed frog), this protein is Macrophage immunometabolism regulator (macir).